Here is a 564-residue protein sequence, read N- to C-terminus: Arginine--tRNA ligase (564 aa).

Positions 122-132 (PNIAKPFSIGH) match the 'HIGH' region motif.

The protein belongs to the class-I aminoacyl-tRNA synthetase family. Monomer.

Its subcellular location is the cytoplasm. The catalysed reaction is tRNA(Arg) + L-arginine + ATP = L-arginyl-tRNA(Arg) + AMP + diphosphate. The sequence is that of Arginine--tRNA ligase from Lactococcus lactis subsp. lactis (strain IL1403) (Streptococcus lactis).